A 566-amino-acid polypeptide reads, in one-letter code: Cytokine-like nuclear factor N-PAC (566 aa).

One can recognise a PWWP domain in the interval 9–70 (VNDLVWAKMK…ETQIKPYLQF (62 aa)). Disordered stretches follow at residues 127 to 147 (VASG…NTTT) and 206 to 234 (MLDD…SSLD). A dehydrogenase domain region spans residues 274-566 (RNIKASQLKF…ASAVYVRARF (293 aa)). Residues 284–298 (GFLG…IVKN) and K518 each bind NAD(+).

It belongs to the HIBADH-related family. NP60 subfamily. Binds to mononucleosomes. Interacts with male-specific lethal (MSL) histone acetyltransferase complex at least composed of mof, msl-1, msl-2 and msl-3.

The protein localises to the chromosome. May have oxidoreductase activity. The sequence is that of Cytokine-like nuclear factor N-PAC from Anopheles gambiae (African malaria mosquito).